Reading from the N-terminus, the 120-residue chain is U13-lycotoxin-Ls1e (120 aa).

The first 16 residues, 1–16, serve as a signal peptide directing secretion; it reads MKILFVLISILYAVYC. A propeptide spanning residues 17-54 is cleaved from the precursor; that stretch reads FSSEEDVDSAYLANELEPVEDINSEQYAALEPKEEQER. Cystine bridges form between C56/C70, C63/C76, C69/C87, and C78/C85. The 40-residue stretch at 56 to 95 folds into the Agouti domain; sequence CAGMGRDCKDDCDCCLNIATCNCWFGRYFCSCTFGDYQTC.

This sequence belongs to the neurotoxin 05 (agouti) family. Contains 6 disulfide bonds. As to expression, expressed by the venom gland.

Its subcellular location is the secreted. The chain is U13-lycotoxin-Ls1e from Lycosa singoriensis (Wolf spider).